The chain runs to 174 residues: MGKITFYEDRGFQGRHYECSTDHSNLQPYFSRCNSVRVDSGCWMLYEQPNFTGCQYFLRRGDYPDYQQWMGFSDSVRSCHLIPHSSSHRIRIYEREDYRGQMVEITDDCPHLQDRFHFSDFHSFHVIEGYWVLYEMPNYRGRQYLLRPREYRRYHDWGAMNARVGSLRRIMDYY.

Beta/gamma crystallin 'Greek key' domains lie at 2–40 (GKIT…RVDS) and 41–83 (GCWM…HLIP). The tract at residues 84 to 87 (HSSS) is connecting peptide. Beta/gamma crystallin 'Greek key' domains follow at residues 88-128 (HRIR…HVIE) and 129-171 (GYWV…RRIM).

This sequence belongs to the beta/gamma-crystallin family.

Its function is as follows. Crystallins are the dominant structural components of the vertebrate eye lens. The sequence is that of Gamma-crystallin F (Crygf) from Rattus norvegicus (Rat).